The chain runs to 263 residues: Protein IQ-DOMAIN 9 (263 aa).

Positions 16–41 are disordered; that stretch reads SKQGTEKKKTSAVKPKKGSKKKGTSL. The Nuclear localization signal 1 motif lies at 21–28; sequence EKKKTSAV. A compositionally biased stretch (basic residues) spans 25 to 38; the sequence is TSAVKPKKGSKKKG. The 30-residue stretch at 46-75 folds into the IQ domain; sequence EDWAATRIQTAFKAYKARKSLRRLKGIARA. A calmodulin-binding region spans residues 59–78; sequence AYKARKSLRRLKGIARAKLS. Positions 107–114 match the Nuclear localization signal 2 motif; that stretch reads ARRVCMVT. The tract at residues 216–263 is disordered; the sequence is TPKKPKSSKTDSNSPAKRTVSLSSVPAKTPFPGARNTVKPRRLSFPGA. Positions 226–241 are enriched in polar residues; that stretch reads DSNSPAKRTVSLSSVP.

It belongs to the IQD family. In terms of assembly, binds to multiple calmodulin (CaM) in the presence of Ca(2+) and CaM-like proteins.

It is found in the nucleus. The protein resides in the nuclear body. In terms of biological role, may be involved in cooperative interactions with calmodulins or calmodulin-like proteins. Recruits calmodulin proteins to microtubules, thus being a potential scaffold in cellular signaling and trafficking. May associate with nucleic acids and regulate gene expression at the transcriptional or post-transcriptional level. The protein is Protein IQ-DOMAIN 9 of Arabidopsis thaliana (Mouse-ear cress).